The sequence spans 759 residues: 1,4-alpha-glucan branching enzyme GlgB (759 aa).

Residues 1-21 are disordered; sequence MAKTKGLPKDTAVTPSPHLRP. Asp-422 serves as the catalytic Nucleophile. The active-site Proton donor is the Glu-475.

This sequence belongs to the glycosyl hydrolase 13 family. GlgB subfamily. As to quaternary structure, monomer.

The enzyme catalyses Transfers a segment of a (1-&gt;4)-alpha-D-glucan chain to a primary hydroxy group in a similar glucan chain.. The protein operates within glycan biosynthesis; glycogen biosynthesis. Functionally, catalyzes the formation of the alpha-1,6-glucosidic linkages in glycogen by scission of a 1,4-alpha-linked oligosaccharide from growing alpha-1,4-glucan chains and the subsequent attachment of the oligosaccharide to the alpha-1,6 position. The polypeptide is 1,4-alpha-glucan branching enzyme GlgB (Mycobacterium sp. (strain JLS)).